The following is a 102-amino-acid chain: Thioredoxin (102 aa).

Positions 1–102 (MVKVVSAENF…SLIRLINQHS (102 aa)) constitute a Thioredoxin domain. C28 and C31 form a disulfide bridge.

Belongs to the thioredoxin family.

In terms of biological role, participates in various redox reactions through the reversible oxidation of its active center dithiol to a disulfide and catalyzes dithiol-disulfide exchange reactions. The protein is Thioredoxin (trxA) of Chlamydia caviae (strain ATCC VR-813 / DSM 19441 / 03DC25 / GPIC) (Chlamydophila caviae).